Consider the following 366-residue polypeptide: 3-dehydroquinate synthase (366 aa).

NAD(+) contacts are provided by residues 107–111, 131–132, Lys144, and Lys153; these read GVIGD and TT. Zn(2+)-binding residues include Glu186, His251, and His268.

It belongs to the sugar phosphate cyclases superfamily. Dehydroquinate synthase family. Co(2+) is required as a cofactor. The cofactor is Zn(2+). It depends on NAD(+) as a cofactor.

It is found in the cytoplasm. It carries out the reaction 7-phospho-2-dehydro-3-deoxy-D-arabino-heptonate = 3-dehydroquinate + phosphate. It functions in the pathway metabolic intermediate biosynthesis; chorismate biosynthesis; chorismate from D-erythrose 4-phosphate and phosphoenolpyruvate: step 2/7. Its function is as follows. Catalyzes the conversion of 3-deoxy-D-arabino-heptulosonate 7-phosphate (DAHP) to dehydroquinate (DHQ). In Microcystis aeruginosa (strain NIES-843 / IAM M-2473), this protein is 3-dehydroquinate synthase.